An 80-amino-acid polypeptide reads, in one-letter code: Large ribosomal subunit protein eL14 (80 aa).

The protein belongs to the eukaryotic ribosomal protein eL14 family.

The chain is Large ribosomal subunit protein eL14 from Methanocaldococcus jannaschii (strain ATCC 43067 / DSM 2661 / JAL-1 / JCM 10045 / NBRC 100440) (Methanococcus jannaschii).